Here is a 38-residue protein sequence, read N- to C-terminus: U9-ctenitoxin-Pk1a (38 aa).

4 cysteine pairs are disulfide-bonded: C2-C17, C9-C22, C16-C36, and C24-C34.

In terms of tissue distribution, expressed by the venom gland.

The protein localises to the secreted. This is U9-ctenitoxin-Pk1a from Phoneutria keyserlingi (Brazilian wandering spider).